Consider the following 80-residue polypeptide: RNA-binding protein Hfq (80 aa).

In terms of domain architecture, Sm spans 10 to 70 (DLFLNTVRKQ…ISTIMPGQPM (61 aa)).

It belongs to the Hfq family. As to quaternary structure, homohexamer.

Its function is as follows. RNA chaperone that binds small regulatory RNA (sRNAs) and mRNAs to facilitate mRNA translational regulation in response to envelope stress, environmental stress and changes in metabolite concentrations. Also binds with high specificity to tRNAs. This Agrobacterium fabrum (strain C58 / ATCC 33970) (Agrobacterium tumefaciens (strain C58)) protein is RNA-binding protein Hfq.